The sequence spans 125 residues: Interferon-induced transmembrane protein 1 (125 aa).

Over 1-36 (MHKEEHEVAVLGPPPSTILPRSTVINIHSETSVPDH) the chain is Cytoplasmic. Residue serine 16 is modified to Phosphoserine. The segment at residues 37-57 (VVWSLFNTLFLNWCCLGFIAF) is an intramembrane region (helical). S-palmitoyl cysteine attachment occurs at residues cysteine 50, cysteine 51, and cysteine 84. At 58 to 86 (AYSVKSRDRKMVGDVTGAQAYASTAKCLN) the chain is on the cytoplasmic side. Residues 84-125 (CLNIWALILGILMTIGFILLLVFGSVTVYHIMLQIIQEKRGY) form an interaction with CAV1 region. A helical membrane pass occupies residues 87-107 (IWALILGILMTIGFILLLVFG). Over 108-125 (SVTVYHIMLQIIQEKRGY) the chain is Extracellular.

The protein belongs to the CD225/Dispanin family. In terms of assembly, interacts with CD81. Part of a complex composed of CD19, CR2/CD21, CD81 and IFITM1/CD225 in the membrane of mature B-cells. Interacts with CAV1; this interaction enhances the ability of CAV1 in inhibiting ERK activation. Palmitoylation on membrane-proximal cysteines controls clustering in membrane compartments and antiviral activity. In terms of tissue distribution, bone (at protein level). Levels greatly elevated in colon cancer, cervical cancer, esophageal cancer and ovarian cancer. Expressed in glioma cell lines.

It is found in the cell membrane. The protein resides in the lysosome membrane. Its function is as follows. IFN-induced antiviral protein which inhibits the entry of viruses to the host cell cytoplasm, permitting endocytosis, but preventing subsequent viral fusion and release of viral contents into the cytosol. Active against multiple viruses, including influenza A virus, SARS coronaviruses (SARS-CoV and SARS-CoV-2), Marburg virus (MARV), Ebola virus (EBOV), Dengue virus (DNV), West Nile virus (WNV), human immunodeficiency virus type 1 (HIV-1) and hepatitis C virus (HCV). Can inhibit: influenza virus hemagglutinin protein-mediated viral entry, MARV and EBOV GP1,2-mediated viral entry and SARS-CoV and SARS-CoV-2 S protein-mediated viral entry. Also implicated in cell adhesion and control of cell growth and migration. Inhibits SARS-CoV-2 S protein-mediated syncytia formation. Plays a key role in the antiproliferative action of IFN-gamma either by inhibiting the ERK activation or by arresting cell growth in G1 phase in a p53-dependent manner. Acts as a positive regulator of osteoblast differentiation. In hepatocytes, IFITM proteins act in a coordinated manner to restrict HCV infection by targeting the endocytosed HCV virion for lysosomal degradation. IFITM2 and IFITM3 display anti-HCV activity that may complement the anti-HCV activity of IFITM1 by inhibiting the late stages of HCV entry, possibly in a coordinated manner by trapping the virion in the endosomal pathway and targeting it for degradation at the lysosome. This Homo sapiens (Human) protein is Interferon-induced transmembrane protein 1.